The sequence spans 378 residues: Quinolinate synthase (378 aa).

The iminosuccinate site is built by H59 and S80. A [4Fe-4S] cluster-binding site is contributed by C125. Iminosuccinate is bound by residues 151-153 (YAN) and S168. C212 is a binding site for [4Fe-4S] cluster. Iminosuccinate-binding positions include 238 to 240 (HPE) and T255. C309 lines the [4Fe-4S] cluster pocket.

Belongs to the quinolinate synthase family. Type 1 subfamily. [4Fe-4S] cluster is required as a cofactor.

The protein resides in the cytoplasm. The catalysed reaction is iminosuccinate + dihydroxyacetone phosphate = quinolinate + phosphate + 2 H2O + H(+). The protein operates within cofactor biosynthesis; NAD(+) biosynthesis; quinolinate from iminoaspartate: step 1/1. Functionally, catalyzes the condensation of iminoaspartate with dihydroxyacetone phosphate to form quinolinate. This is Quinolinate synthase from Burkholderia lata (strain ATCC 17760 / DSM 23089 / LMG 22485 / NCIMB 9086 / R18194 / 383).